The following is a 459-amino-acid chain: Pentatricopeptide repeat-containing protein At1g07740, mitochondrial (459 aa).

The transit peptide at 1-20 (MRRRLSSVLINNQCIASQRH) directs the protein to the mitochondrion. The interval 19–41 (RHYHTSRPEKPTKKASSHEPTHK) is disordered. Residues 24–41 (SRPEKPTKKASSHEPTHK) show a composition bias toward basic and acidic residues. 10 PPR repeats span residues 80–114 (DYPS…NVRC), 115–149 (RESL…DCVR), 150–184 (TIQS…RLRP), 185–219 (NSVS…EVQP), 220–254 (SVVT…RIRP), 255–289 (NAVT…GCKP), 290–324 (GLVN…RIKP), 325–359 (DVVI…GCKP), 360–394 (NAAT…RHCP), and 395–429 (TPAT…NLSF).

Belongs to the PPR family. P subfamily.

It localises to the mitochondrion. The polypeptide is Pentatricopeptide repeat-containing protein At1g07740, mitochondrial (Arabidopsis thaliana (Mouse-ear cress)).